The primary structure comprises 224 residues: UPF0758 protein lmo1549 (224 aa).

Residues 102–224 (VVRCPEDAVK…YISLKEKGYF (123 aa)) enclose the MPN domain. Positions 173, 175, and 186 each coordinate Zn(2+). Positions 173-186 (HNHPSGDPTPSSED) match the JAMM motif motif.

Belongs to the UPF0758 family.

In Listeria monocytogenes serovar 1/2a (strain ATCC BAA-679 / EGD-e), this protein is UPF0758 protein lmo1549.